The primary structure comprises 162 residues: Probable chemoreceptor glutamine deamidase CheD (162 aa).

Belongs to the CheD family.

It catalyses the reaction L-glutaminyl-[protein] + H2O = L-glutamyl-[protein] + NH4(+). Probably deamidates glutamine residues to glutamate on methyl-accepting chemotaxis receptors (MCPs), playing an important role in chemotaxis. This Syntrophotalea carbinolica (strain DSM 2380 / NBRC 103641 / GraBd1) (Pelobacter carbinolicus) protein is Probable chemoreceptor glutamine deamidase CheD.